Reading from the N-terminus, the 679-residue chain is DNA-directed RNA polymerase subunit beta' (679 aa).

The Zn(2+) site is built by cysteine 69, cysteine 71, cysteine 84, and cysteine 87. Residues aspartate 486, aspartate 488, and aspartate 490 each contribute to the Mg(2+) site.

The protein belongs to the RNA polymerase beta' chain family. RpoC1 subfamily. In terms of assembly, in plastids the minimal PEP RNA polymerase catalytic core is composed of four subunits: alpha, beta, beta', and beta''. When a (nuclear-encoded) sigma factor is associated with the core the holoenzyme is formed, which can initiate transcription. The cofactor is Mg(2+). Zn(2+) serves as cofactor.

The protein localises to the plastid. It is found in the chloroplast. It catalyses the reaction RNA(n) + a ribonucleoside 5'-triphosphate = RNA(n+1) + diphosphate. DNA-dependent RNA polymerase catalyzes the transcription of DNA into RNA using the four ribonucleoside triphosphates as substrates. This Physcomitrium patens (Spreading-leaved earth moss) protein is DNA-directed RNA polymerase subunit beta'.